The primary structure comprises 267 residues: GTP cyclohydrolase FolE2 (267 aa).

This sequence belongs to the GTP cyclohydrolase IV family.

It catalyses the reaction GTP + H2O = 7,8-dihydroneopterin 3'-triphosphate + formate + H(+). It functions in the pathway cofactor biosynthesis; 7,8-dihydroneopterin triphosphate biosynthesis; 7,8-dihydroneopterin triphosphate from GTP: step 1/1. Functionally, converts GTP to 7,8-dihydroneopterin triphosphate. This chain is GTP cyclohydrolase FolE2, found in Cupriavidus necator (strain ATCC 17699 / DSM 428 / KCTC 22496 / NCIMB 10442 / H16 / Stanier 337) (Ralstonia eutropha).